Consider the following 142-residue polypeptide: Large ribosomal subunit protein uL11 (142 aa).

As to quaternary structure, part of the ribosomal stalk of the 50S ribosomal subunit. Interacts with L10 and the large rRNA to form the base of the stalk. L10 forms an elongated spine to which L12 dimers bind in a sequential fashion forming a multimeric L10(L12)X complex. In terms of processing, lys-40 is trimethylated or acetylated; other modifications may also exist.

Forms part of the ribosomal stalk which helps the ribosome interact with GTP-bound translation factors. This is Large ribosomal subunit protein uL11 from Rhodopseudomonas palustris (strain ATCC BAA-98 / CGA009).